A 180-amino-acid chain; its full sequence is Iron sulfur cluster assembly protein 1, mitochondrial (180 aa).

Belongs to the NifU family. Component of the core Fe-S cluster (ISC) assembly machinery. [2Fe-2S] cluster serves as cofactor.

It localises to the mitochondrion matrix. Its pathway is cofactor biosynthesis; iron-sulfur cluster biosynthesis. Its function is as follows. Scaffold protein for the de novo synthesis of iron-sulfur (Fe-S) clusters within mitochondria, which is required for maturation of both mitochondrial and cytoplasmic [2Fe-2S] and [4Fe-4S] proteins. First, a [2Fe-2S] cluster is transiently assembled on the scaffold protein ISU1. In a second step, the cluster is released from ISU1, transferred to a glutaredoxin, followed by the formation of mitochondrial [2Fe-2S] proteins, the synthesis of [4Fe-4S] clusters and their target-specific insertion into the recipient apoproteins. Cluster assembly on ISU1 depends on the function of the cysteine desulfurase complex NFS1-ISD11, which serves as the sulfur donor for cluster synthesis, the iron-binding protein frataxin as the putative iron donor, and the electron transfer chain comprised of ferredoxin reductase and ferredoxin, which receive their electrons from NADH. The sequence is that of Iron sulfur cluster assembly protein 1, mitochondrial (ISU1) from Kluyveromyces lactis (strain ATCC 8585 / CBS 2359 / DSM 70799 / NBRC 1267 / NRRL Y-1140 / WM37) (Yeast).